The sequence spans 157 residues: Transcription elongation factor GreA (157 aa).

This sequence belongs to the GreA/GreB family.

Necessary for efficient RNA polymerase transcription elongation past template-encoded arresting sites. The arresting sites in DNA have the property of trapping a certain fraction of elongating RNA polymerases that pass through, resulting in locked ternary complexes. Cleavage of the nascent transcript by cleavage factors such as GreA or GreB allows the resumption of elongation from the new 3'terminus. GreA releases sequences of 2 to 3 nucleotides. In Azorhizobium caulinodans (strain ATCC 43989 / DSM 5975 / JCM 20966 / LMG 6465 / NBRC 14845 / NCIMB 13405 / ORS 571), this protein is Transcription elongation factor GreA.